We begin with the raw amino-acid sequence, 185 residues long: Elongation factor P (185 aa).

Belongs to the elongation factor P family.

It localises to the cytoplasm. The protein operates within protein biosynthesis; polypeptide chain elongation. Its function is as follows. Involved in peptide bond synthesis. Stimulates efficient translation and peptide-bond synthesis on native or reconstituted 70S ribosomes in vitro. Probably functions indirectly by altering the affinity of the ribosome for aminoacyl-tRNA, thus increasing their reactivity as acceptors for peptidyl transferase. The sequence is that of Elongation factor P (efp) from Lactococcus lactis subsp. lactis (strain IL1403) (Streptococcus lactis).